The sequence spans 266 residues: Segregation and condensation protein A (266 aa).

Belongs to the ScpA family. As to quaternary structure, component of a cohesin-like complex composed of ScpA, ScpB and the Smc homodimer, in which ScpA and ScpB bind to the head domain of Smc. The presence of the three proteins is required for the association of the complex with DNA.

It is found in the cytoplasm. Functionally, participates in chromosomal partition during cell division. May act via the formation of a condensin-like complex containing Smc and ScpB that pull DNA away from mid-cell into both cell halves. The chain is Segregation and condensation protein A from Coxiella burnetii (strain RSA 493 / Nine Mile phase I).